Reading from the N-terminus, the 318-residue chain is Ribose-phosphate pyrophosphokinase 2 (318 aa).

96–101 (RQDKKD) serves as a coordination point for ATP. Mg(2+)-binding residues include D128, H130, D139, and D143. Position 130 (H130) interacts with ATP. A binding of phosphoribosylpyrophosphate region spans residues 212 to 227 (KDRVAILVDDMADTCG).

This sequence belongs to the ribose-phosphate pyrophosphokinase family. In terms of assembly, homodimer. The active form is probably a hexamer composed of 3 homodimers. Mg(2+) serves as cofactor.

The enzyme catalyses D-ribose 5-phosphate + ATP = 5-phospho-alpha-D-ribose 1-diphosphate + AMP + H(+). The protein operates within metabolic intermediate biosynthesis; 5-phospho-alpha-D-ribose 1-diphosphate biosynthesis; 5-phospho-alpha-D-ribose 1-diphosphate from D-ribose 5-phosphate (route I): step 1/1. Activated by magnesium and inorganic phosphate. Catalyzes the synthesis of phosphoribosylpyrophosphate (PRPP) that is essential for nucleotide synthesis. This is Ribose-phosphate pyrophosphokinase 2 (Prps2) from Rattus norvegicus (Rat).